Reading from the N-terminus, the 329-residue chain is tRNA-modifying protein YgfZ (329 aa).

Positions 27 and 189 each coordinate folate.

The protein belongs to the tRNA-modifying YgfZ family.

Its subcellular location is the cytoplasm. Its function is as follows. Folate-binding protein involved in regulating the level of ATP-DnaA and in the modification of some tRNAs. It is probably a key factor in regulatory networks that act via tRNA modification, such as initiation of chromosomal replication. This Cronobacter sakazakii (strain ATCC BAA-894) (Enterobacter sakazakii) protein is tRNA-modifying protein YgfZ.